The primary structure comprises 211 residues: Lysozyme g (211 aa).

Positions 1–26 (MLGKNDPMCLVLVLLGLTALLGICQG) are cleaved as a signal peptide. Cystine bridges form between Cys30/Cys86 and Cys44/Cys55. Catalysis depends on residues Glu99 and Asp112.

The protein belongs to the glycosyl hydrolase 23 family. In terms of tissue distribution, granulocyte compartment of myelomonocytic cells.

The protein localises to the secreted. The enzyme catalyses Hydrolysis of (1-&gt;4)-beta-linkages between N-acetylmuramic acid and N-acetyl-D-glucosamine residues in a peptidoglycan and between N-acetyl-D-glucosamine residues in chitodextrins.. The protein is Lysozyme g of Gallus gallus (Chicken).